A 2294-amino-acid polypeptide reads, in one-letter code: Protein Ycf2 (2294 aa).

1635–1642 (GSIGTGRS) provides a ligand contact to ATP.

The protein belongs to the Ycf2 family.

It localises to the plastid. Its subcellular location is the chloroplast stroma. In terms of biological role, probable ATPase of unknown function. Its presence in a non-photosynthetic plant (Epifagus virginiana) and experiments in tobacco indicate that it has an essential function which is probably not related to photosynthesis. This Ranunculus macranthus (Large buttercup) protein is Protein Ycf2.